The following is a 224-amino-acid chain: MAERTVKPQRRALVNRTTNETKIQISLSLDGGYVTVPESIFKDKKYDDATQVTSSQVISINTGVGFLDHMIHALAKHGGWSLIVECIGDLHIDDHHTTEDVGIALGDAVKEALAYRGVKRFGSGFAPLDEALSRAVVDLSNRPFAVVELGLKREKIGDLSCEMIPHFLESFAQAAHITMHVDCLRGFNDHHRAESAFKALAVAIKESISSNGTNDVPSTKGVLF.

It belongs to the imidazoleglycerol-phosphate dehydratase family.

The enzyme catalyses D-erythro-1-(imidazol-4-yl)glycerol 3-phosphate = 3-(imidazol-4-yl)-2-oxopropyl phosphate + H2O. It functions in the pathway amino-acid biosynthesis; L-histidine biosynthesis; L-histidine from 5-phospho-alpha-D-ribose 1-diphosphate: step 6/9. In Cyberlindnera jadinii (Torula yeast), this protein is Imidazoleglycerol-phosphate dehydratase (HIS3).